We begin with the raw amino-acid sequence, 322 residues long: Putative integrase ORF3 (322 aa).

An Integrase catalytic domain is found at 153-322 (RGKLTDFKSI…SSKEMFLQNI (170 aa)).

The protein belongs to the plectrovirus integrase ORF3 family.

In terms of biological role, this protein may encode an integrase, which is necessary for integration of the viral DNA into host genome. The polypeptide is Putative integrase ORF3 (Spiroplasma virus SpV1-R8A2 B (SpV1)).